The chain runs to 257 residues: Diphthine synthase (257 aa).

S-adenosyl-L-methionine is bound by residues Ile11, Asp89, Ile92, 117-118 (SV), Leu169, Leu210, and His235.

It belongs to the diphthine synthase family. In terms of assembly, homodimer.

The enzyme catalyses 2-[(3S)-amino-3-carboxypropyl]-L-histidyl-[translation elongation factor 2] + 3 S-adenosyl-L-methionine = diphthine-[translation elongation factor 2] + 3 S-adenosyl-L-homocysteine + 3 H(+). The protein operates within protein modification; peptidyl-diphthamide biosynthesis. In terms of biological role, S-adenosyl-L-methionine-dependent methyltransferase that catalyzes the trimethylation of the amino group of the modified target histidine residue in translation elongation factor 2 (EF-2), to form an intermediate called diphthine. The three successive methylation reactions represent the second step of diphthamide biosynthesis. This chain is Diphthine synthase, found in Saccharolobus islandicus (strain L.S.2.15 / Lassen #1) (Sulfolobus islandicus).